The chain runs to 324 residues: Inhibitor of growth protein 1 homolog (324 aa).

The interval 120-237 (AEEEKKKKKS…SSRKQKSMAA (118 aa)) is disordered. A compositionally biased stretch (low complexity) spans 140 to 169 (SSTTSSSSSSSSSSLSLSSSTNNTSSLNSS). The segment covering 170–186 (SGGGGGGSGGGGGGGGH) has biased composition (gly residues). Over residues 201-229 (SLTSSSSSGNINGMSSSSSSSSSSSSLSS) the composition is skewed to low complexity. The segment at 271-320 (PTYCFCNRVSFGEMVGCENPDCKIEWFHFECVGLTSTPKGKWYCPDCTRI) adopts a PHD-type zinc-finger fold. Residues cysteine 274, cysteine 276, cysteine 287, cysteine 292, histidine 298, cysteine 301, cysteine 314, and cysteine 317 each coordinate Zn(2+).

Belongs to the ING family. Interacts with H3K4me3 and to a lesser extent with H3K4me2.

It is found in the nucleus. In terms of biological role, involved in regulation of the growth and differentiation transition (GDT) process, probably by regulating gene expression via histone modification. In Dictyostelium discoideum (Social amoeba), this protein is Inhibitor of growth protein 1 homolog.